The following is a 244-amino-acid chain: Ribonuclease PH (244 aa).

Residues R90 and 128–130 (GTR) contribute to the phosphate site.

The protein belongs to the RNase PH family. Homohexameric ring arranged as a trimer of dimers.

It carries out the reaction tRNA(n+1) + phosphate = tRNA(n) + a ribonucleoside 5'-diphosphate. Its function is as follows. Phosphorolytic 3'-5' exoribonuclease that plays an important role in tRNA 3'-end maturation. Removes nucleotide residues following the 3'-CCA terminus of tRNAs; can also add nucleotides to the ends of RNA molecules by using nucleoside diphosphates as substrates, but this may not be physiologically important. Probably plays a role in initiation of 16S rRNA degradation (leading to ribosome degradation) during starvation. The chain is Ribonuclease PH from Cutibacterium acnes (strain DSM 16379 / KPA171202) (Propionibacterium acnes).